Here is a 136-residue protein sequence, read N- to C-terminus: ATP synthase epsilon chain (136 aa).

Residues Asp-95–Gln-115 are disordered. Over residues Ser-101–Gln-115 the composition is skewed to basic and acidic residues.

The protein belongs to the ATPase epsilon chain family. In terms of assembly, F-type ATPases have 2 components, CF(1) - the catalytic core - and CF(0) - the membrane proton channel. CF(1) has five subunits: alpha(3), beta(3), gamma(1), delta(1), epsilon(1). CF(0) has three main subunits: a, b and c.

It localises to the cellular thylakoid membrane. Produces ATP from ADP in the presence of a proton gradient across the membrane. The sequence is that of ATP synthase epsilon chain from Rippkaea orientalis (strain PCC 8801 / RF-1) (Cyanothece sp. (strain PCC 8801)).